The primary structure comprises 176 residues: Translation initiation factor IF-3 (176 aa).

Belongs to the IF-3 family. In terms of assembly, monomer.

Its subcellular location is the cytoplasm. IF-3 binds to the 30S ribosomal subunit and shifts the equilibrium between 70S ribosomes and their 50S and 30S subunits in favor of the free subunits, thus enhancing the availability of 30S subunits on which protein synthesis initiation begins. The polypeptide is Translation initiation factor IF-3 (Microcystis aeruginosa (strain NIES-843 / IAM M-2473)).